Here is a 222-residue protein sequence, read N- to C-terminus: Vacuolar protein sorting-associated protein 2 homolog 2 (222 aa).

Coiled coils occupy residues 26–83 (RGIE…AQIR) and 143–222 (SEAI…LRRI). Residues 179 to 222 (SSAPKGRIATKTAAPPASTAATNKNSESSEVDELEKRLASLRRI) are disordered. Residues 187–203 (ATKTAAPPASTAATNKN) show a composition bias toward low complexity.

Belongs to the SNF7 family. Component of the endosomal sorting required for transport complex III (ESCRT-III), composed at least of VPS2, VPS20, VPS24 and VPS32. Interacts with CHMP1A, CHMP1B and VPS60-1.

The protein resides in the endosome. Its function is as follows. Component of the ESCRT-III complex, which is required for multivesicular bodies (MVBs) formation and sorting of endosomal cargo proteins into MVBs. The ESCRT-III complex is probably involved in the concentration of MVB cargo. The sequence is that of Vacuolar protein sorting-associated protein 2 homolog 2 (VPS2.2) from Arabidopsis thaliana (Mouse-ear cress).